A 400-amino-acid polypeptide reads, in one-letter code: Acetate kinase (400 aa).

Residue asparagine 7 coordinates Mg(2+). Lysine 14 is a binding site for ATP. Arginine 85 contacts substrate. Aspartate 142 acts as the Proton donor/acceptor in catalysis. ATP is bound by residues 202–206, 278–280, and 326–330; these read HLGNG, DMR, and GIGEN. Glutamate 380 contributes to the Mg(2+) binding site.

Belongs to the acetokinase family. As to quaternary structure, homodimer. The cofactor is Mg(2+). Requires Mn(2+) as cofactor.

It is found in the cytoplasm. The catalysed reaction is acetate + ATP = acetyl phosphate + ADP. Its pathway is metabolic intermediate biosynthesis; acetyl-CoA biosynthesis; acetyl-CoA from acetate: step 1/2. Functionally, catalyzes the formation of acetyl phosphate from acetate and ATP. Can also catalyze the reverse reaction. The protein is Acetate kinase of Deinococcus deserti (strain DSM 17065 / CIP 109153 / LMG 22923 / VCD115).